The following is a 397-amino-acid chain: CCA-adding enzyme (397 aa).

ATP is bound by residues glycine 26 and arginine 29. The CTP site is built by glycine 26 and arginine 29. Residues aspartate 39 and aspartate 41 each coordinate Mg(2+). Residues arginine 110, aspartate 153, arginine 156, arginine 159, and arginine 162 each coordinate ATP. Arginine 110, aspartate 153, arginine 156, arginine 159, and arginine 162 together coordinate CTP.

The protein belongs to the tRNA nucleotidyltransferase/poly(A) polymerase family. Bacterial CCA-adding enzyme type 3 subfamily. In terms of assembly, homodimer. It depends on Mg(2+) as a cofactor.

The enzyme catalyses a tRNA precursor + 2 CTP + ATP = a tRNA with a 3' CCA end + 3 diphosphate. The catalysed reaction is a tRNA with a 3' CCA end + 2 CTP + ATP = a tRNA with a 3' CCACCA end + 3 diphosphate. Its function is as follows. Catalyzes the addition and repair of the essential 3'-terminal CCA sequence in tRNAs without using a nucleic acid template. Adds these three nucleotides in the order of C, C, and A to the tRNA nucleotide-73, using CTP and ATP as substrates and producing inorganic pyrophosphate. tRNA 3'-terminal CCA addition is required both for tRNA processing and repair. Also involved in tRNA surveillance by mediating tandem CCA addition to generate a CCACCA at the 3' terminus of unstable tRNAs. While stable tRNAs receive only 3'-terminal CCA, unstable tRNAs are marked with CCACCA and rapidly degraded. The sequence is that of CCA-adding enzyme from Bacillus cereus (strain ATCC 10987 / NRS 248).